Consider the following 290-residue polypeptide: Membrane protein insertase YidC (290 aa).

An N-terminal signal peptide occupies residues 1–19; the sequence is MKKKALLPLFLGIMVFLAG. C20 carries N-palmitoyl cysteine lipidation. Residue C20 is the site of S-diacylglycerol cysteine attachment. 5 consecutive transmembrane segments (helical) span residues 56–76, 134–154, 176–196, 207–224, and 229–251; these read YGLA…PFML, MLGC…YFVL, PDIW…YVSS, GYMM…ISLS, and LGLY…NIYY. The interval 270-290 is disordered; it reads HNGGSNKKGKNTQVVSKKKKK.

It belongs to the OXA1/ALB3/YidC family. Type 2 subfamily.

The protein localises to the cell membrane. Functionally, required for the insertion and/or proper folding and/or complex formation of integral membrane proteins into the membrane. Involved in integration of membrane proteins that insert both dependently and independently of the Sec translocase complex, as well as at least some lipoproteins. This is Membrane protein insertase YidC from Staphylococcus aureus (strain Mu3 / ATCC 700698).